A 298-amino-acid polypeptide reads, in one-letter code: ATP synthase F(1) complex subunit gamma, mitochondrial (298 aa).

The transit peptide at 1–25 (MFSRASVVGLSACAVQPQWIQVRNM) directs the protein to the mitochondrion. Lys39 carries the N6-acetyllysine modification. At Lys49 the chain carries N6-succinyllysine. Lys55 is modified (N6-acetyllysine). Lys115 is subject to N6-acetyllysine; alternate. Lys115 carries the N6-succinyllysine; alternate modification. Lys138 carries the post-translational modification N6-acetyllysine. Residue Ser146 is modified to Phosphoserine. Residue Lys154 is modified to N6-acetyllysine; alternate. Lys154 carries the N6-succinyllysine; alternate modification. At Lys197 the chain carries N6-acetyllysine. Lys270 is modified (N6-succinyllysine).

It belongs to the ATPase gamma chain family. As to quaternary structure, component of the ATP synthase complex composed at least of ATP5F1A/subunit alpha, ATP5F1B/subunit beta, ATP5MC1/subunit c (homooctomer), MT-ATP6/subunit a, MT-ATP8/subunit 8, ATP5ME/subunit e, ATP5MF/subunit f, ATP5MG/subunit g, ATP5MK/subunit k, ATP5MJ/subunit j, ATP5F1C/subunit gamma, ATP5F1D/subunit delta, ATP5F1E/subunit epsilon, ATP5PF/subunit F6, ATP5PB/subunit b, ATP5PD/subunit d, ATP5PO/subunit OSCP. ATP synthase complex consists of a soluble F(1) head domain (subunits alpha(3) and beta(3)) - the catalytic core - and a membrane F(0) domain - the membrane proton channel (subunits c, a, 8, e, f, g, k and j). These two domains are linked by a central stalk (subunits gamma, delta, and epsilon) rotating inside the F1 region and a stationary peripheral stalk (subunits F6, b, d, and OSCP). Interacts with FLVCR2; this interaction occurs in the absence of heme and is disrupted upon heme binding.

It is found in the mitochondrion inner membrane. Its function is as follows. Subunit gamma, of the mitochondrial membrane ATP synthase complex (F(1)F(0) ATP synthase or Complex V) that produces ATP from ADP in the presence of a proton gradient across the membrane which is generated by electron transport complexes of the respiratory chain. ATP synthase complex consist of a soluble F(1) head domain - the catalytic core - and a membrane F(1) domain - the membrane proton channel. These two domains are linked by a central stalk rotating inside the F(1) region and a stationary peripheral stalk. During catalysis, ATP synthesis in the catalytic domain of F(1) is coupled via a rotary mechanism of the central stalk subunits to proton translocation. In vivo, can only synthesize ATP although its ATP hydrolase activity can be activated artificially in vitro. With the central stalk subunit delta, is essential for the biogenesis of F(1) catalytic part of the ATP synthase complex namely in the formation of F1 assembly intermediate. In Mus musculus (Mouse), this protein is ATP synthase F(1) complex subunit gamma, mitochondrial.